A 1152-amino-acid polypeptide reads, in one-letter code: Receptor-type guanylate cyclase gcy-8 (1152 aa).

The first 21 residues, 1–21 (MRTKKAFLLLTFNVLIYLAAC), serve as a signal peptide directing secretion. Over 22–506 (QETERILANN…GYRNERCDYT (485 aa)) the chain is Extracellular. N-linked (GlcNAc...) asparagine glycosylation is found at N31, N55, N385, and N465. A helical membrane pass occupies residues 507-527 (LIIIGAALILLFIVAAVSAFF). At 528-1152 (AQKILEKRAL…NLKNPTGLQR (625 aa)) the chain is on the cytoplasmic side. Residues 567 to 857 (RTKMSNMNYG…RIKLNVETYL (291 aa)) form the Protein kinase domain. Residues 573 to 581 (MNYGSRNHA) and K593 each bind ATP. A coiled-coil region spans residues 861 to 899 (GSLVDQMTRMMEQYANNLEKLVAERTGMLEEANQRADRL). Residues 927 to 1057 (TVLFSDIVGF…DTVNMASRME (131 aa)) form the Guanylate cyclase domain. Positions 932, 933, and 976 each coordinate Mg(2+).

Belongs to the adenylyl cyclase class-4/guanylyl cyclase family. As to expression, expressed bilaterally in AFD sensory neurons.

The protein resides in the cell membrane. The protein localises to the cell projection. It localises to the cilium. The catalysed reaction is GTP = 3',5'-cyclic GMP + diphosphate. Inhibited by chloride with an IC(50) of 60 mM. In terms of biological role, guanylate cyclase involved in the production of the second messenger cGMP. Regulates thermotaxis responses in AFD sensory neurons. May regulate AFD neuronal activity such as calcium responses to temperature gradients. Maintains the microvilli receptive ending morphology of the AFD thermosensory neurons by regulating cGMP levels downstream of kcc-3. cGMP levels antagonize the actin cytoskeleton regulator wsp-1. The chain is Receptor-type guanylate cyclase gcy-8 from Caenorhabditis elegans.